Here is a 127-residue protein sequence, read N- to C-terminus: Glycine cleavage system H protein (127 aa).

A Lipoyl-binding domain is found at 23–105 (KVSVGITDFA…YGEGWIAVIE (83 aa)). K64 is modified (N6-lipoyllysine).

It belongs to the GcvH family. As to quaternary structure, the glycine cleavage system is composed of four proteins: P, T, L and H. It depends on (R)-lipoate as a cofactor.

The glycine cleavage system catalyzes the degradation of glycine. The H protein shuttles the methylamine group of glycine from the P protein to the T protein. This is Glycine cleavage system H protein from Coprothermobacter proteolyticus (strain ATCC 35245 / DSM 5265 / OCM 4 / BT).